We begin with the raw amino-acid sequence, 136 residues long: D-ribose pyranase (136 aa).

The active-site Proton donor is the His20. Substrate-binding positions include Asp28, His98, and 120-122 (YAN).

The protein belongs to the RbsD / FucU family. RbsD subfamily. Homodecamer.

The protein localises to the cytoplasm. The enzyme catalyses beta-D-ribopyranose = beta-D-ribofuranose. It functions in the pathway carbohydrate metabolism; D-ribose degradation; D-ribose 5-phosphate from beta-D-ribopyranose: step 1/2. Catalyzes the interconversion of beta-pyran and beta-furan forms of D-ribose. This chain is D-ribose pyranase, found in Geobacillus kaustophilus (strain HTA426).